The primary structure comprises 160 residues: Serine-protein kinase RsbW (160 aa).

The protein belongs to the anti-sigma-factor family.

It carries out the reaction L-seryl-[protein] + ATP = O-phospho-L-seryl-[protein] + ADP + H(+). The catalysed reaction is L-threonyl-[protein] + ATP = O-phospho-L-threonyl-[protein] + ADP + H(+). In terms of biological role, negative regulator of sigma-B activity. Phosphorylates and inactivates its specific antagonist protein, RsbV. Upon phosphorylation of RsbV, RsbW is released and binds to sigma-B, thereby blocking its ability to form an RNA polymerase holoenzyme (E-sigma-B). The polypeptide is Serine-protein kinase RsbW (Bacillus cereus (strain ZK / E33L)).